Here is a 502-residue protein sequence, read N- to C-terminus: UDP-N-acetylmuramoylalanine--D-glutamate ligase (502 aa).

129–135 (GTNGKTT) contributes to the ATP binding site.

Belongs to the MurCDEF family.

It localises to the cytoplasm. The enzyme catalyses UDP-N-acetyl-alpha-D-muramoyl-L-alanine + D-glutamate + ATP = UDP-N-acetyl-alpha-D-muramoyl-L-alanyl-D-glutamate + ADP + phosphate + H(+). It participates in cell wall biogenesis; peptidoglycan biosynthesis. Cell wall formation. Catalyzes the addition of glutamate to the nucleotide precursor UDP-N-acetylmuramoyl-L-alanine (UMA). This Burkholderia ambifaria (strain MC40-6) protein is UDP-N-acetylmuramoylalanine--D-glutamate ligase.